We begin with the raw amino-acid sequence, 317 residues long: Transaldolase (317 aa).

The Schiff-base intermediate with substrate role is filled by lysine 132.

It belongs to the transaldolase family. Type 1 subfamily. As to quaternary structure, homodimer.

The protein localises to the cytoplasm. The catalysed reaction is D-sedoheptulose 7-phosphate + D-glyceraldehyde 3-phosphate = D-erythrose 4-phosphate + beta-D-fructose 6-phosphate. Its pathway is carbohydrate degradation; pentose phosphate pathway; D-glyceraldehyde 3-phosphate and beta-D-fructose 6-phosphate from D-ribose 5-phosphate and D-xylulose 5-phosphate (non-oxidative stage): step 2/3. In terms of biological role, transaldolase is important for the balance of metabolites in the pentose-phosphate pathway. In Yersinia pseudotuberculosis serotype O:3 (strain YPIII), this protein is Transaldolase.